Reading from the N-terminus, the 72-residue chain is MSKEDVIEVEGKVVEALPNAMFEVELENGHKVLAHISGKLRMNFIRILPGDKVTVELSPYDLTRGRITWRAK.

The S1-like domain maps to 1–72 (MSKEDVIEVE…TRGRITWRAK (72 aa)).

This sequence belongs to the IF-1 family. In terms of assembly, component of the 30S ribosomal translation pre-initiation complex which assembles on the 30S ribosome in the order IF-2 and IF-3, IF-1 and N-formylmethionyl-tRNA(fMet); mRNA recruitment can occur at any time during PIC assembly.

It is found in the cytoplasm. In terms of biological role, one of the essential components for the initiation of protein synthesis. Stabilizes the binding of IF-2 and IF-3 on the 30S subunit to which N-formylmethionyl-tRNA(fMet) subsequently binds. Helps modulate mRNA selection, yielding the 30S pre-initiation complex (PIC). Upon addition of the 50S ribosomal subunit IF-1, IF-2 and IF-3 are released leaving the mature 70S translation initiation complex. This Acetivibrio thermocellus (strain ATCC 27405 / DSM 1237 / JCM 9322 / NBRC 103400 / NCIMB 10682 / NRRL B-4536 / VPI 7372) (Clostridium thermocellum) protein is Translation initiation factor IF-1.